The following is a 209-amino-acid chain: COP9 signalosome complex subunit 8 (209 aa).

Residues 8–179 (ESAFSFKKLL…GALDVSFNKF (172 aa)) enclose the PCI domain. Position 175 is a phosphoserine (Ser-175).

It belongs to the CSN8 family. As to quaternary structure, component of the CSN complex, composed of COPS1/GPS1, COPS2, COPS3, COPS4, COPS5, COPS6, COPS7 (COPS7A or COPS7B), COPS8 and COPS9 isoform 1. In the complex, it probably interacts directly with COPS3, COPS4 and COPS7 (COPS7A or COPS7B).

It is found in the cytoplasm. The protein resides in the nucleus. Component of the COP9 signalosome complex (CSN), a complex involved in various cellular and developmental processes. The CSN complex is an essential regulator of the ubiquitin (Ubl) conjugation pathway by mediating the deneddylation of the cullin subunits of SCF-type E3 ligase complexes, leading to decrease the Ubl ligase activity of SCF-type complexes such as SCF, CSA or DDB2. The complex is also involved in phosphorylation of p53/TP53, c-jun/JUN, IkappaBalpha/NFKBIA, ITPK1 and IRF8/ICSBP, possibly via its association with CK2 and PKD kinases. CSN-dependent phosphorylation of TP53 and JUN promotes and protects degradation by the Ubl system, respectively. The polypeptide is COP9 signalosome complex subunit 8 (COPS8) (Homo sapiens (Human)).